Consider the following 161-residue polypeptide: Transcriptional repressor NrdR (161 aa).

A zinc finger spans residues 3–34; that stretch reads CPSCQHTDSRVLESRAADSGKSVRRRRECLNC. The 91-residue stretch at 49–139 folds into the ATP-cone domain; the sequence is ITVVKRSGTR…VYGKFSGISD (91 aa).

It belongs to the NrdR family. Zn(2+) serves as cofactor.

In terms of biological role, negatively regulates transcription of bacterial ribonucleotide reductase nrd genes and operons by binding to NrdR-boxes. This Synechococcus sp. (strain RCC307) protein is Transcriptional repressor NrdR.